The chain runs to 88 residues: Small ribosomal subunit protein uS17 (88 aa).

This sequence belongs to the universal ribosomal protein uS17 family. In terms of assembly, part of the 30S ribosomal subunit.

One of the primary rRNA binding proteins, it binds specifically to the 5'-end of 16S ribosomal RNA. The protein is Small ribosomal subunit protein uS17 of Prochlorococcus marinus (strain MIT 9303).